Reading from the N-terminus, the 2474-residue chain is Highly reducing polyketide synthase 40 (2474 aa).

Residues 1-294 (MFKETEIQQR…GSNAHIIIDD (294 aa)) enclose the Ketosynthase family 3 (KS3) domain. Catalysis depends on for beta-ketoacyl synthase activity residues Cys42, His177, and His217. Positions 459-798 (FVFTGQGAQW…GYESVLRRGT (340 aa)) constitute a Malonyl-CoA:ACP transacylase (MAT) domain. An N-terminal hotdog fold region spans residues 864-998 (HELLGAPVPD…GLVVTEYEQP (135 aa)). Residues 864-1182 (HELLGAPVPD…ITTVARSEGA (319 aa)) form the PKS/mFAS DH domain. The active-site Proton acceptor; for dehydratase activity is the His896. Residues 1027 to 1182 (KVETSFRQLY…ITTVARSEGA (156 aa)) are C-terminal hotdog fold. Catalysis depends on Asp1093, which acts as the Proton donor; for dehydratase activity. The interval 1232–1535 (VEMMCFLYIK…DLHIYDFPDH (304 aa)) is methyltransferase (CMet) domain. The Enoyl reductase (ER) domain occupies 1770–2063 (GLLDSLQFQD…SGSHMGKLVL (294 aa)). Positions 2087–2263 (ASYLLSGGLG…PGVAVDLGMI (177 aa)) constitute a Ketoreductase (KR) domain. Positions 2385–2462 (DAAKIVSAAI…ELAELAAKRS (78 aa)) constitute a Carrier domain. Ser2422 carries the post-translational modification O-(pantetheine 4'-phosphoryl)serine.

Pantetheine 4'-phosphate serves as cofactor.

The protein operates within secondary metabolite biosynthesis. In terms of biological role, highly reducing polyketide synthase; part of the gene cluster that mediates the biosynthesis of the gamma-pyrones fusapyrone (FPY) and deoxyfusapyrone (dFPY). FPY is an undecaketide and thus likely synthesized by the polyketide synthase FPY1 from acetyl-CoA functioning as starter unit and the addition of 10 malonyl-CoA extender units by successive Claisen-condensations. Next to this, FPY shares some rare features: C-glycosylated 4-deoxyglucose at C-3, a gem-dimethyl group at C-13, and an alpha-beta to beta-gamma double bond shift at C-20. During FPY biosynthesis mono-C-methyl groups are transferred to the tetra-, penta-, hexa- and heptaketide, while two C-methyl groups are transferred to the nonaketide, suggesting that the CMet domain is programmed to selectively catalyze two successive C-alpha-methylation reactions of the nonaketide, while other alpha-carbons are non- or mono-methylated only. While the origin of the 4'-deoxyglucose moiety remains opaque, its transfer to C-3 is most likely mediated by the C-glycosyltransferase FPY2. Next to this, the hydroxyl group present at C-33 and discriminating between FPY and dFPY, is likely to be installed by the cytochrome P450 monooxygenase FPY7. No putative function can be predicted for the remaining genes FPY3-FPY6. This Fusarium mangiferae (Mango malformation disease fungus) protein is Highly reducing polyketide synthase 40.